Consider the following 378-residue polypeptide: L-asparaginase-like protein GF11609 (378 aa).

A signal peptide spans 1 to 21 (MCSPLPLLILRLLLLTHPSLG). 3 cysteine pairs are disulfide-bonded: C71/C76, C170/C186, and C325/C352.

Belongs to the Ntn-hydrolase family.

This is L-asparaginase-like protein GF11609 from Drosophila ananassae (Fruit fly).